A 254-amino-acid polypeptide reads, in one-letter code: Flavin-dependent thymidylate synthase (254 aa).

One can recognise a ThyX domain in the interval 7–237; that stretch reads LRVQLIAKTE…PAVFADFEIT (231 aa). DUMP is bound by residues 92-95, 103-107, and histidine 176; these read ELIR and QLSQR. FAD-binding positions include 95–97 and glutamine 103; that span reads RHR. A ThyX motif motif is present at residues 95 to 105; sequence RHRHFSYSQLS. FAD contacts are provided by residues 192-194 and histidine 198; that span reads NYR. Arginine 203 contributes to the dUMP binding site. The active-site Involved in ionization of N3 of dUMP, leading to its activation is arginine 203.

It belongs to the thymidylate synthase ThyX family. In terms of assembly, homotetramer. FAD is required as a cofactor.

The enzyme catalyses dUMP + (6R)-5,10-methylene-5,6,7,8-tetrahydrofolate + NADPH + H(+) = dTMP + (6S)-5,6,7,8-tetrahydrofolate + NADP(+). Its pathway is pyrimidine metabolism; dTTP biosynthesis. Its function is as follows. Catalyzes the reductive methylation of 2'-deoxyuridine-5'-monophosphate (dUMP) to 2'-deoxythymidine-5'-monophosphate (dTMP) while utilizing 5,10-methylenetetrahydrofolate (mTHF) as the methyl donor, and NADPH and FADH(2) as the reductant. The chain is Flavin-dependent thymidylate synthase from Mycobacterium leprae (strain Br4923).